The following is an 874-amino-acid chain: MKEEAFLRRRFSLCPPASTPQKTDPRKVPRNLLLGCENELGPITPGRDMESNGPSQPRDEEPQTPGSATKVPLAEYRLCNGSDKECTSPTTRVSKKDALKAQKENYRQEKKRATKQLFSALTDPSVVIMADSLKIRGTLKSWTKLWCVLKPGVLLIYKTPKVGQWVGTVLLHCCELIERPSKKDGFCFKLFHPLDQSVWAVKGPKGESVGSITQPLPSSYLIFRAASESDGRCWLDALELALRCSSLLRLSTCKQGRDGEQGSSPDASPSSLYGLPTSATIPDQDLFPLNGSALENDAFSDKSERENAEDSDAETQDHSRKTNESGSDLLDSPGGPWRGTTYVEQVQEELGELDETSQVETVSEENKSLMWVLLRQLRPGMDLSRVVLPTFVLEPRSFLGKLSDYYYHGDLLSRAAAEDDPYCRMKLVLRWYLSGFYKKPKGIKKPYNPILGETFRCRWLHPQTNSHTFYIAEQVSHHPPVSAFYVSNRKDGFCMSGSITAKSKFYGNSLSALLDGKAKLTFLNRKEEYTLTMPYAHCRGILYGTMTMELGGKVNIECEKNNLQAELDFKLKPFFGSSANINQISGKIMSGEEVLARLTGHWDRDVFIKEESSGGTELFWTPSEEVRRQRLKRHTVLLEEQSELESERLWQHVTRAIREGDQHKATQEKSVLEEAQRQRAREHQQSLTPWKPQLFLLDPLTQEWRYRYEDLSPWDPLKDIAQYEQDGILHTLQRETMSGQTTFLGSPDSRHKRPSSDRRLRKASDQPSGHSQVTESSGSTPESCPDLSDEDFVPGGESPCPRCRREVHRLKMLQEAVLSIQEAQQELHRHLSTMLSSTVRAGQAPAPSLLQNPRSWFLLCIFLTCQLFINYILK.

The tract at residues 1–71 (MKEEAFLRRR…PQTPGSATKV (71 aa)) is disordered. At Ser-12 the chain carries Phosphoserine. Residues 93 to 123 (VSKKDALKAQKENYRQEKKRATKQLFSALTD) adopt a coiled-coil conformation. The PH domain occupies 126-243 (VVIMADSLKI…WLDALELALR (118 aa)). Disordered stretches follow at residues 255–277 (QGRD…GLPT) and 299–338 (FSDK…GPWR). Residues 261–277 (QGSSPDASPSSLYGLPT) show a composition bias toward polar residues. Basic and acidic residues predominate over residues 299 to 308 (FSDKSERENA). Residues 383–388 (LSRVVL), 445–448 (KPYN), and 477–478 (HH) contribute to the a 1,2-diacyl-sn-glycero-3-phospho-(1D-myo-inositol 4-phosphate) site. A 1,2-diacyl-sn-glycero-3-phospho-L-serine contacts are provided by residues 383–388 (LSRVVL) and Asn-448. Ser-503 is an a 1,2-diacyl-sn-glycero-3-phospho-L-serine binding site. Basic and acidic residues predominate over residues 660–684 (GDQHKATQEKSVLEEAQRQRAREHQ). Disordered stretches follow at residues 660 to 685 (GDQH…EHQQ) and 739 to 798 (GQTT…GGES). Lys-669, Glu-673, and Arg-677 together coordinate a 1,2-diacyl-sn-glycero-3-phospho-(1D-myo-inositol 4-phosphate). A phosphoserine mark is found at Ser-746 and Ser-749. The segment covering 754–764 (PSSDRRLRKAS) has biased composition (basic and acidic residues). Polar residues predominate over residues 765–782 (DQPSGHSQVTESSGSTPE). A helical membrane pass occupies residues 855 to 873 (SWFLLCIFLTCQLFINYIL).

The protein belongs to the OSBP family.

Its subcellular location is the endoplasmic reticulum membrane. Functionally, lipid transporter involved in lipid countertransport between the endoplasmic reticulum and the plasma membrane: specifically exchanges phosphatidylserine with phosphatidylinositol 4-phosphate (PI4P), delivering phosphatidylserine to the plasma membrane in exchange for PI4P, which is degraded by the SAC1/SACM1L phosphatase in the endoplasmic reticulum. Binds phosphatidylserine and PI4P in a mutually exclusive manner. May cooperate with NPC1 to mediate the exit of cholesterol from endosomes/lysosomes. Binds 25-hydroxycholesterol and cholesterol. This is Oxysterol-binding protein-related protein 5 (Osbpl5) from Mus musculus (Mouse).